Reading from the N-terminus, the 688-residue chain is Phosphatidylinositol 4-phosphate 5-kinase type-1 gamma (688 aa).

Positions 48–71 are disordered; it reads GQPGPGHGKKLGHRGVDASGETTY. The PIPK domain occupies 75 to 443; the sequence is TSSTLKGAIQ…RFFKFMSSTV (369 aa). An N6-acetyllysine mark is found at lysine 265 and lysine 268. Arginine 459 carries the asymmetric dimethylarginine; alternate modification. Arginine 459 carries the post-translational modification Omega-N-methylarginine; alternate. Residues 525–534 are compositionally biased toward low complexity; the sequence is TTLSSTSLSI. Disordered stretches follow at residues 525-565 and 592-629; these read TTLS…QEEL and GAGV…EEDA. Position 554 is a phosphoserine (serine 554). Residues 602 to 623 show a composition bias toward low complexity; it reads ASAAATVEVDAASQASEPASQA. Phosphotyrosine; by EGFR is present on tyrosine 635. Tyrosine 671 bears the Phosphotyrosine; by CSK mark. Serine 672 carries the phosphoserine; by CDK5, MAPK1 and CDK1 modification. Residues serine 682 and serine 686 each carry the phosphoserine modification. Threonine 688 carries the phosphothreonine modification.

As to quaternary structure, interacts with TLN1. Interacts with TLN2; interaction stimulates 1-phosphatidylinositol-4-phosphate 5-kinase activity. May compete with beta-integrins for the same binding site on TLN1 and TLN2. Interacts with ARF6; interaction stimulates 1-phosphatidylinositol-4-phosphate 5-kinase activity. Interacts with AP2B1. Interacts with AP2M1; phosphorylation of PIP5K1C by CSK disrupts the interaction; clathrin competes with PIP5K1C. Interacts with CDH1. Interacts with CSK. Interacts with PLCG1; interaction is abolished upon EGF stimulation. Interacts with LAPTM4B; promotes SNX5 association with LAPTM4B; kinase activity of PIP5K1C is required; interaction is regulated by phosphatidylinositol 4,5-bisphosphate generated by PIP5K1C. In terms of processing, phosphorylation on Ser-672 negatively regulates binding to TLN2 and is strongly stimulated in mitosis. Phosphorylation on Tyr-671 is necessary for targeting to focal adhesions. Phosphorylation on Ser-672 and Tyr-671 are mutually exclusive. Phosphorylated by SYK and CSK. Tyrosine phosphorylation is enhanced by PTK2 signaling. Phosphorylated at Tyr-635 upon EGF stimulation. Some studies suggest that phosphorylation on Tyr-671 enhances binding to tailins (TLN1 and TLN2); others that phosphorylation at Tyr-671 does not directly enhance binding to tailins (TLN1 and TLN2) but may act indirectly by inhibiting phosphorylation at Ser-672. Post-translationally, acetylation at Lys-265 and Lys-268 seems to decrease lipid kinase activity. Deacetylation of these sites by SIRT1 positively regulates the exocytosis of TSH-containing granules from pituitary cells.

The protein localises to the cell membrane. The protein resides in the endomembrane system. It is found in the cytoplasm. Its subcellular location is the cell junction. It localises to the focal adhesion. The protein localises to the adherens junction. The protein resides in the cell projection. It is found in the ruffle membrane. Its subcellular location is the phagocytic cup. It localises to the uropodium. It carries out the reaction a 1,2-diacyl-sn-glycero-3-phospho-(1D-myo-inositol 4-phosphate) + ATP = a 1,2-diacyl-sn-glycero-3-phospho-(1D-myo-inositol-4,5-bisphosphate) + ADP + H(+). The enzyme catalyses 1-octadecanoyl-2-(5Z,8Z,11Z,14Z)-eicosatetraenoyl-sn-glycero-3-phospho-1D-myo-inositol 4-phosphate + ATP = 1-octadecanoyl-2-(5Z,8Z,11Z,14Z)-eicosatetraenoyl-sn-glycero-3-phospho-1D-myo-inositol 4,5-bisphosphate + ADP + H(+). The catalysed reaction is 1-octadecanoyl-2-(9Z)-octadecenoyl-sn-glycero-3-phospho-1D-myo-inositol 4-phosphate + ATP = 1-octadecanoyl-2-(9Z)-octadecenoyl-sn-glycero-3-phospho-1D-myo-inositol 4,5-bisphosphate + ADP + H(+). It catalyses the reaction 1-octadecanoyl-2-(9Z)-octadecenoyl-sn-glycero-3-phospho-1D-myo-inositol + ATP = 1-octadecanoyl-2-(9Z)-octadecenoyl-sn-glycero-3-phospho-1D-myo-inositol 5-phosphate + ADP + H(+). It carries out the reaction 1-octadecanoyl-2-(9Z,12Z)-octadecadienoyl-sn-glycero-3-phospho-1D-myo-inositol + ATP = 1-octadecanoyl-2-(9Z,12Z)-octadecadienoyl-sn-glycero-3-phospho-1D-myo-inositol 5-phosphate + ADP + H(+). The enzyme catalyses 1-octadecanoyl-2-(5Z,8Z,11Z,14Z-eicosatetraenoyl)-sn-glycero-3-phospho-(1D-myo-inositol) + ATP = 1-octadecanoyl-2-(5Z,8Z,11Z,14Z)-eicosatetraenoyl-sn-glycero-3-phospho-1D-myo-inositol 5-phosphate + ADP + H(+). The catalysed reaction is 1,2-di-(9Z,12Z)-octadecadienoyl-sn-glycero-3-phospho-1D-myo-inositol + ATP = 1,2-di(9Z,12Z)-octadecadienoyl-sn-glycero-3-phospho-1D-myo-inositol 5-phosphate + ADP + H(+). In terms of biological role, catalyzes the phosphorylation of phosphatidylinositol 4-phosphate (PtdIns(4)P/PI4P) to form phosphatidylinositol 4,5-bisphosphate (PtdIns(4,5)P2/PIP2), a lipid second messenger that regulates several cellular processes such as signal transduction, vesicle trafficking, actin cytoskeleton dynamics, cell adhesion, and cell motility. PtdIns(4,5)P2 can directly act as a second messenger or can be utilized as a precursor to generate other second messengers: inositol 1,4,5-trisphosphate (IP3), diacylglycerol (DAG) or phosphatidylinositol-3,4,5-trisphosphate (PtdIns(3,4,5)P3/PIP3). PIP5K1A-mediated phosphorylation of PtdIns(4)P is the predominant pathway for PtdIns(4,5)P2 synthesis. Together with PIP5K1A, is required for phagocytosis, both enzymes regulating different types of actin remodeling at sequential steps. Promotes particle attachment by generating the pool of PtdIns(4,5)P2 that induces controlled actin depolymerization to facilitate Fc-gamma-R clustering. Mediates RAC1-dependent reorganization of actin filaments. Required for synaptic vesicle transport. Controls the plasma membrane pool of PtdIns(4,5)P2 implicated in synaptic vesicle endocytosis and exocytosis. Plays a role in endocytosis mediated by clathrin and AP-2 (adaptor protein complex 2). Required for clathrin-coated pits assembly at the synapse. Participates in cell junction assembly. Modulates adherens junctions formation by facilitating CDH1/cadherin trafficking. Required for focal adhesion dynamics. Modulates the targeting of talins (TLN1 and TLN2) to the plasma membrane and their efficient assembly into focal adhesions. Regulates the interaction between talins (TLN1 and TLN2) and beta-integrins. Required for uropodium formation and retraction of the cell rear during directed migration. Has a role in growth factor-stimulated directional cell migration and adhesion. Required for talin assembly into nascent adhesions forming at the leading edge toward the direction of the growth factor. Negative regulator of T-cell activation and adhesion. Negatively regulates integrin alpha-L/beta-2 (LFA-1) polarization and adhesion induced by T-cell receptor. Together with PIP5K1A has a role during embryogenesis and together with PIP5K1B may have a role immediately after birth. The polypeptide is Phosphatidylinositol 4-phosphate 5-kinase type-1 gamma (Rattus norvegicus (Rat)).